Reading from the N-terminus, the 152-residue chain is Xanthine-guanine phosphoribosyltransferase (152 aa).

5-phospho-alpha-D-ribose 1-diphosphate contacts are provided by residues 37–38 (RG), Arg69, and 88–96 (DDLVDTGGT). Arg69 is a binding site for GMP. Asp89 contributes to the Mg(2+) binding site. Guanine is bound by residues Asp92 and Ile135. Xanthine contacts are provided by Asp92 and Ile135. GMP contacts are provided by residues 92–96 (DTGGT) and 134–135 (WI).

It belongs to the purine/pyrimidine phosphoribosyltransferase family. XGPT subfamily. As to quaternary structure, homotetramer. Requires Mg(2+) as cofactor.

It localises to the cell inner membrane. The enzyme catalyses GMP + diphosphate = guanine + 5-phospho-alpha-D-ribose 1-diphosphate. It catalyses the reaction XMP + diphosphate = xanthine + 5-phospho-alpha-D-ribose 1-diphosphate. It carries out the reaction IMP + diphosphate = hypoxanthine + 5-phospho-alpha-D-ribose 1-diphosphate. Its pathway is purine metabolism; GMP biosynthesis via salvage pathway; GMP from guanine: step 1/1. It participates in purine metabolism; XMP biosynthesis via salvage pathway; XMP from xanthine: step 1/1. In terms of biological role, purine salvage pathway enzyme that catalyzes the transfer of the ribosyl-5-phosphate group from 5-phospho-alpha-D-ribose 1-diphosphate (PRPP) to the N9 position of the 6-oxopurines guanine and xanthine to form the corresponding ribonucleotides GMP (guanosine 5'-monophosphate) and XMP (xanthosine 5'-monophosphate), with the release of PPi. To a lesser extent, also acts on hypoxanthine. This Serratia proteamaculans (strain 568) protein is Xanthine-guanine phosphoribosyltransferase.